Here is a 257-residue protein sequence, read N- to C-terminus: 1-(5-phosphoribosyl)-5-[(5-phosphoribosylamino)methylideneamino] imidazole-4-carboxamide isomerase (257 aa).

Belongs to the HisA/HisF family.

The protein resides in the cytoplasm. It carries out the reaction 1-(5-phospho-beta-D-ribosyl)-5-[(5-phospho-beta-D-ribosylamino)methylideneamino]imidazole-4-carboxamide = 5-[(5-phospho-1-deoxy-D-ribulos-1-ylimino)methylamino]-1-(5-phospho-beta-D-ribosyl)imidazole-4-carboxamide. The protein operates within amino-acid biosynthesis; L-histidine biosynthesis; L-histidine from 5-phospho-alpha-D-ribose 1-diphosphate: step 4/9. In Neurospora crassa (strain ATCC 24698 / 74-OR23-1A / CBS 708.71 / DSM 1257 / FGSC 987), this protein is 1-(5-phosphoribosyl)-5-[(5-phosphoribosylamino)methylideneamino] imidazole-4-carboxamide isomerase (his-7).